The primary structure comprises 156 residues: Small ribosomal subunit protein uS7 (156 aa).

The protein belongs to the universal ribosomal protein uS7 family. In terms of assembly, part of the 30S ribosomal subunit. Contacts proteins S9 and S11.

Functionally, one of the primary rRNA binding proteins, it binds directly to 16S rRNA where it nucleates assembly of the head domain of the 30S subunit. Is located at the subunit interface close to the decoding center, probably blocks exit of the E-site tRNA. The protein is Small ribosomal subunit protein uS7 of Pseudomonas syringae pv. tomato (strain ATCC BAA-871 / DC3000).